The chain runs to 196 residues: Large ribosomal subunit protein uL11m (196 aa).

This sequence belongs to the universal ribosomal protein uL11 family. As to quaternary structure, component of the mitochondrial ribosome large subunit (39S) which comprises a 16S rRNA and about 50 distinct proteins.

The protein localises to the mitochondrion. This chain is Large ribosomal subunit protein uL11m (mRpL11), found in Drosophila melanogaster (Fruit fly).